The primary structure comprises 358 residues: D-alanine--D-alanine ligase B (358 aa).

Residues 147–352 (KYVLENFKFK…YSALIDELIE (206 aa)) form the ATP-grasp domain. 179–234 (VEKLQYDVFIKPANSGSSVGITKAHNKEELLKGLEEAFIHDKNVLVEEAINAREIE) contributes to the ATP binding site. Mg(2+) contacts are provided by Asp305, Glu319, and Asn321.

Belongs to the D-alanine--D-alanine ligase family. The cofactor is Mg(2+). Mn(2+) serves as cofactor.

The protein localises to the cytoplasm. It carries out the reaction 2 D-alanine + ATP = D-alanyl-D-alanine + ADP + phosphate + H(+). Its pathway is cell wall biogenesis; peptidoglycan biosynthesis. In terms of biological role, cell wall formation. The chain is D-alanine--D-alanine ligase B from Clostridium tetani (strain Massachusetts / E88).